Reading from the N-terminus, the 268-residue chain is Ribosomal RNA small subunit methyltransferase A (268 aa).

S-adenosyl-L-methionine is bound by residues asparagine 16, leucine 18, glycine 43, glutamate 64, aspartate 89, and asparagine 110.

The protein belongs to the class I-like SAM-binding methyltransferase superfamily. rRNA adenine N(6)-methyltransferase family. RsmA subfamily.

The protein localises to the cytoplasm. The catalysed reaction is adenosine(1518)/adenosine(1519) in 16S rRNA + 4 S-adenosyl-L-methionine = N(6)-dimethyladenosine(1518)/N(6)-dimethyladenosine(1519) in 16S rRNA + 4 S-adenosyl-L-homocysteine + 4 H(+). In terms of biological role, specifically dimethylates two adjacent adenosines (A1518 and A1519) in the loop of a conserved hairpin near the 3'-end of 16S rRNA in the 30S particle. May play a critical role in biogenesis of 30S subunits. The chain is Ribosomal RNA small subunit methyltransferase A from Pseudomonas syringae pv. tomato (strain ATCC BAA-871 / DC3000).